The primary structure comprises 248 residues: Proteasome subunit alpha (248 aa).

Residues 229–248 are disordered; sequence LLEADGATTEAESSAEEEDE.

This sequence belongs to the peptidase T1A family. As to quaternary structure, the 20S proteasome core is composed of 14 alpha and 14 beta subunits that assemble into four stacked heptameric rings, resulting in a barrel-shaped structure. The two inner rings, each composed of seven catalytic beta subunits, are sandwiched by two outer rings, each composed of seven alpha subunits. The catalytic chamber with the active sites is on the inside of the barrel. Has a gated structure, the ends of the cylinder being occluded by the N-termini of the alpha-subunits. Is capped by the proteasome-associated ATPase, ARC.

It localises to the cytoplasm. Its pathway is protein degradation; proteasomal Pup-dependent pathway. Its activity is regulated as follows. The formation of the proteasomal ATPase ARC-20S proteasome complex, likely via the docking of the C-termini of ARC into the intersubunit pockets in the alpha-rings, may trigger opening of the gate for substrate entry. Interconversion between the open-gate and close-gate conformations leads to a dynamic regulation of the 20S proteasome proteolysis activity. Functionally, component of the proteasome core, a large protease complex with broad specificity involved in protein degradation. The protein is Proteasome subunit alpha of Streptomyces scabiei (strain 87.22).